The primary structure comprises 89 residues: Small ribosomal subunit protein uS15 (89 aa).

This sequence belongs to the universal ribosomal protein uS15 family. In terms of assembly, part of the 30S ribosomal subunit. Forms a bridge to the 50S subunit in the 70S ribosome, contacting the 23S rRNA.

Its function is as follows. One of the primary rRNA binding proteins, it binds directly to 16S rRNA where it helps nucleate assembly of the platform of the 30S subunit by binding and bridging several RNA helices of the 16S rRNA. Forms an intersubunit bridge (bridge B4) with the 23S rRNA of the 50S subunit in the ribosome. This is Small ribosomal subunit protein uS15 from Yersinia pseudotuberculosis serotype O:1b (strain IP 31758).